A 324-amino-acid polypeptide reads, in one-letter code: MKLQQLRYIVEVVNHNLNVSSTAEGLYTSQPGISKQVRMLEDELGIQIFARSGKHLTQVTPAGQEIIRIAREVLSKVDAIKSVAGEHTWPDKGSLYIATTHTQARYALPGVIKGFIERYPRVSLHMHQGSPTQIAEAVSKGNADFAIATEALHLYDDLVMLPCYHWNRSIVVTPDHPLAATSSVTIEALAQYPLVTYTFGFTGRSELDTAFNRAGLTPRIVFTATDADVIKTYVRLGLGVGVIASMAVDPLADPDLVRIDAHDIFSHSTTKIGFRRSTFLRSYMYDFIQRFAPHLTRDVVDTAVALRSNEEIEAMFQDIKLPEK.

Residues 1-59 (MKLQQLRYIVEVVNHNLNVSSTAEGLYTSQPGISKQVRMLEDELGIQIFARSGKHLTQV) form the HTH lysR-type domain. Positions 19–38 (VSSTAEGLYTSQPGISKQVR) form a DNA-binding region, H-T-H motif.

The protein belongs to the LysR transcriptional regulatory family. Homotetramer.

Its subcellular location is the cytoplasm. Its function is as follows. This protein is a positive regulator of gene expression for the cysteine regulon, a system of 10 or more loci involved in the biosynthesis of L-cysteine from inorganic sulfate. The inducer for CysB is N-acetylserine. CysB inhibits its own transcription. The chain is HTH-type transcriptional regulator CysB (cysB) from Salmonella typhimurium (strain LT2 / SGSC1412 / ATCC 700720).